The primary structure comprises 284 residues: L-ribulose-5-phosphate 3-epimerase UlaE (284 aa).

It belongs to the L-ribulose-5-phosphate 3-epimerase family.

It catalyses the reaction L-ribulose 5-phosphate = L-xylulose 5-phosphate. The protein operates within cofactor degradation; L-ascorbate degradation; D-xylulose 5-phosphate from L-ascorbate: step 3/4. Catalyzes the isomerization of L-xylulose-5-phosphate to L-ribulose-5-phosphate. Is involved in the anaerobic L-ascorbate utilization. The protein is L-ribulose-5-phosphate 3-epimerase UlaE of Escherichia coli O45:K1 (strain S88 / ExPEC).